Reading from the N-terminus, the 555-residue chain is Carboxylesterase patB (555 aa).

The signal sequence occupies residues 1 to 16 (MLFTASLLLLLPWASA). N-linked (GlcNAc...) asparagine glycosylation is found at asparagine 37 and asparagine 75. The active-site Acyl-ester intermediate is the serine 258. Serine 258 lines the substrate pocket. A glycan (N-linked (GlcNAc...) asparagine) is linked at asparagine 311. Glutamate 380 acts as the Charge relay system in catalysis. Asparagine 388 and asparagine 491 each carry an N-linked (GlcNAc...) asparagine glycan.

This sequence belongs to the type-B carboxylesterase/lipase family.

It is found in the cytoplasm. The protein resides in the cytosol. The enzyme catalyses a carboxylic ester + H2O = an alcohol + a carboxylate + H(+). It functions in the pathway mycotoxin biosynthesis; patulin biosynthesis. Its function is as follows. Carboxylesterase; part of the gene cluster that mediates the biosynthesis of patulin, an acetate-derived tetraketide mycotoxin produced by several fungal species that shows antimicrobial properties against several bacteria. The function of patB in patulin synthesis has still to be characterized. The pathway begins with the synthesis of 6-methylsalicylic acid by the polyketide synthase (PKS) patK via condensation of acetate and malonate units. The 6-methylsalicylic acid decarboxylase patG then catalyzes the decarboxylation of 6-methylsalicylic acid to yield m-cresol (also known as 3-methylphenol). These first reactions occur in the cytosol. The intermediate m-cresol is then transported into the endoplasmic reticulum where the cytochrome P450 monooxygenase patH converts it to m-hydroxybenzyl alcohol, which is further converted to gentisyl alcohol by the cytochrome P450 monooxygenase patI. The oxidoreductases patJ and patO further convert gentisyl alcohol to isoepoxydon in the vacuole. PatN catalyzes then the transformation of isoepoxydon into phyllostine. The cluster protein patF is responsible for the conversion from phyllostine to neopatulin whereas the alcohol dehydrogenase patD converts neopatulin to E-ascladiol. The steps between isoepoxydon and E-ascladiol occur in the cytosol, and E-ascladiol is probably secreted to the extracellular space by one of the cluster-specific transporters patC or patM. Finally, the secreted patulin synthase patE catalyzes the conversion of E-ascladiol to patulin. In Aspergillus clavatus (strain ATCC 1007 / CBS 513.65 / DSM 816 / NCTC 3887 / NRRL 1 / QM 1276 / 107), this protein is Carboxylesterase patB.